The chain runs to 227 residues: Phosphoribosylformylglycinamidine synthase subunit PurQ (227 aa).

The region spanning 3–225 (FAVIVLPGSN…VKNWRETHVA (223 aa)) is the Glutamine amidotransferase type-1 domain. The active-site Nucleophile is the C86. Catalysis depends on residues H194 and E196.

In terms of assembly, part of the FGAM synthase complex composed of 1 PurL, 1 PurQ and 2 PurS subunits.

The protein localises to the cytoplasm. The enzyme catalyses N(2)-formyl-N(1)-(5-phospho-beta-D-ribosyl)glycinamide + L-glutamine + ATP + H2O = 2-formamido-N(1)-(5-O-phospho-beta-D-ribosyl)acetamidine + L-glutamate + ADP + phosphate + H(+). It carries out the reaction L-glutamine + H2O = L-glutamate + NH4(+). The protein operates within purine metabolism; IMP biosynthesis via de novo pathway; 5-amino-1-(5-phospho-D-ribosyl)imidazole from N(2)-formyl-N(1)-(5-phospho-D-ribosyl)glycinamide: step 1/2. Its function is as follows. Part of the phosphoribosylformylglycinamidine synthase complex involved in the purines biosynthetic pathway. Catalyzes the ATP-dependent conversion of formylglycinamide ribonucleotide (FGAR) and glutamine to yield formylglycinamidine ribonucleotide (FGAM) and glutamate. The FGAM synthase complex is composed of three subunits. PurQ produces an ammonia molecule by converting glutamine to glutamate. PurL transfers the ammonia molecule to FGAR to form FGAM in an ATP-dependent manner. PurS interacts with PurQ and PurL and is thought to assist in the transfer of the ammonia molecule from PurQ to PurL. The chain is Phosphoribosylformylglycinamidine synthase subunit PurQ from Bacillus licheniformis (strain ATCC 14580 / DSM 13 / JCM 2505 / CCUG 7422 / NBRC 12200 / NCIMB 9375 / NCTC 10341 / NRRL NRS-1264 / Gibson 46).